Consider the following 220-residue polypeptide: Adenylate kinase (220 aa).

An ATP-binding site is contributed by 10–15; sequence GAGKGT. An NMP region spans residues 30–59; that stretch reads STGDMLRAAVKAGTPLGVEAKGYMDAGKLV. Residues Thr-31, Arg-36, 57–59, 85–88, and Gln-92 contribute to the AMP site; these read KLV and GFPR. Residues 122–159 form an LID region; the sequence is GRRTHPASGRTYHVKFNPPKVEGHDDVTGEPLIQRDDD. Residues Arg-123 and 132 to 133 each bind ATP; that span reads TY. AMP is bound by residues Arg-156 and Arg-167. Position 206 (Gly-206) interacts with ATP.

This sequence belongs to the adenylate kinase family. As to quaternary structure, monomer.

The protein resides in the cytoplasm. The catalysed reaction is AMP + ATP = 2 ADP. The protein operates within purine metabolism; AMP biosynthesis via salvage pathway; AMP from ADP: step 1/1. Functionally, catalyzes the reversible transfer of the terminal phosphate group between ATP and AMP. Plays an important role in cellular energy homeostasis and in adenine nucleotide metabolism. The chain is Adenylate kinase from Burkholderia lata (strain ATCC 17760 / DSM 23089 / LMG 22485 / NCIMB 9086 / R18194 / 383).